Here is a 265-residue protein sequence, read N- to C-terminus: Histone H1 (265 aa).

Low complexity predominate over residues 1 to 27 (MATEEPIVAVETVPEPIVTEPTTITEP). 3 disordered regions span residues 1-66 (MATE…PTYE), 131-226 (AAKK…TTPG), and 242-265 (VKSV…GGRK). A compositionally biased stretch (basic and acidic residues) spans 29 to 42 (VPEKEEPKAEVEKT). Basic residues predominate over residues 43–55 (KKAKGSKPKKASK). One can recognise an H15 domain in the interval 61–130 (SHPTYEEMIK…KVKGSFKLSA (70 aa)). Over residues 140 to 171 (PKAKTAAKAKSVKAKPAAKPKAKAVVKPKVAS) the composition is skewed to basic residues. Positions 186 to 202 (KPKTVAAKTKPTAAKPK) are enriched in low complexity. A compositionally biased stretch (basic residues) spans 203-215 (AVVKPKSKVKPAK). Positions 216–226 (VAKTSVKTTPG) are enriched in low complexity.

Belongs to the histone H1/H5 family.

It is found in the nucleus. Its subcellular location is the chromosome. In terms of biological role, histones H1 are necessary for the condensation of nucleosome chains into higher-order structures. The chain is Histone H1 from Pisum sativum (Garden pea).